A 677-amino-acid chain; its full sequence is Methionine--tRNA ligase (677 aa).

A 'HIGH' region motif is present at residues 15–25 (PYANGSIHLGH). Residues cysteine 146, cysteine 149, cysteine 159, and cysteine 162 each coordinate Zn(2+). The 'KMSKS' region signature appears at 333 to 337 (KMSKS). Lysine 336 is a binding site for ATP. One can recognise a tRNA-binding domain in the interval 576 to 677 (DFAKIDLRVA…EGAKPGMRVK (102 aa)).

This sequence belongs to the class-I aminoacyl-tRNA synthetase family. MetG type 1 subfamily. As to quaternary structure, homodimer. It depends on Zn(2+) as a cofactor.

It is found in the cytoplasm. It carries out the reaction tRNA(Met) + L-methionine + ATP = L-methionyl-tRNA(Met) + AMP + diphosphate. In terms of biological role, is required not only for elongation of protein synthesis but also for the initiation of all mRNA translation through initiator tRNA(fMet) aminoacylation. The sequence is that of Methionine--tRNA ligase from Aeromonas hydrophila subsp. hydrophila (strain ATCC 7966 / DSM 30187 / BCRC 13018 / CCUG 14551 / JCM 1027 / KCTC 2358 / NCIMB 9240 / NCTC 8049).